A 122-amino-acid polypeptide reads, in one-letter code: Biogenesis of lysosome-related organelles complex 1 subunit BLS1 (122 aa).

Ser-33 bears the Phosphoserine mark.

This sequence belongs to the BLOC1S1 family. As to quaternary structure, component of the biogenesis of lysosome-related organelles complex-1 (BLOC-1) composed of at least BLI1, BLS1, CNL1, KXD1, SNN1 and VAB2.

It is found in the endosome. In terms of biological role, component of the biogenesis of lysosome-related organelles complex-1 (BLOC-1), a complex involved in endosomal cargo sorting. The chain is Biogenesis of lysosome-related organelles complex 1 subunit BLS1 (BLS1) from Saccharomyces cerevisiae (strain YJM789) (Baker's yeast).